A 210-amino-acid chain; its full sequence is Large ribosomal subunit protein uL4 (210 aa).

Positions 46–77 (QGTHKSKERGEIAGSTKKIKKQKGTGTARAGS) are disordered.

The protein belongs to the universal ribosomal protein uL4 family. In terms of assembly, part of the 50S ribosomal subunit.

In terms of biological role, one of the primary rRNA binding proteins, this protein initially binds near the 5'-end of the 23S rRNA. It is important during the early stages of 50S assembly. It makes multiple contacts with different domains of the 23S rRNA in the assembled 50S subunit and ribosome. Functionally, forms part of the polypeptide exit tunnel. The protein is Large ribosomal subunit protein uL4 of Amoebophilus asiaticus (strain 5a2).